Consider the following 617-residue polypeptide: V-type proton ATPase catalytic subunit A (617 aa).

The residue at position 136 (T136) is a Phosphothreonine. 250-257 (GAFGCGKT) is an ATP binding site. Phosphoserine; by AMPK is present on S384.

Belongs to the ATPase alpha/beta chains family. V-ATPase is a heteromultimeric enzyme made up of two complexes: the ATP-hydrolytic V1 complex and the proton translocation V0 complex. The V1 complex consists of three catalytic AB heterodimers that form a heterohexamer, three peripheral stalks each consisting of EG heterodimers, one central rotor including subunits D and F, and the regulatory subunits C and H. The proton translocation complex V0 consists of the proton transport subunit a, a ring of proteolipid subunits c9c'', rotary subunit d, subunits e and f, and the accessory subunits ATP6AP1/Ac45 and ATP6AP2/PRR. Interacts with the V0 complex V-ATPase subunit a4 ATP6V0A4. Interacts with WFS1. Interacts with alpha-crystallin B chain/CRYAB and with MTOR, forming a ternary complex. In terms of processing, phosphorylation at Ser-384 by AMPK down-regulates its enzyme activity.

The protein resides in the cytoplasm. It localises to the cytosol. It is found in the cytoplasmic vesicle. Its subcellular location is the secretory vesicle. The protein localises to the clathrin-coated vesicle membrane. The protein resides in the lysosome. It catalyses the reaction ATP + H2O + 4 H(+)(in) = ADP + phosphate + 5 H(+)(out). ATP hydrolysis occurs at the interface between the nucleotide-binding domains of subunits A and B. ATP hydrolysis triggers a conformational change in the subunits D and F, which induces a shift of subunit d. The c-ring is subsequently rotated and results in a continuous proton translocation across the membrane. In terms of biological role, catalytic subunit of the V1 complex of vacuolar(H+)-ATPase (V-ATPase), a multisubunit enzyme composed of a peripheral complex (V1) that hydrolyzes ATP and a membrane integral complex (V0) that translocates protons. V-ATPase is responsible for acidifying and maintaining the pH of intracellular compartments and in some cell types, is targeted to the plasma membrane, where it is responsible for acidifying the extracellular environment. In aerobic conditions, involved in intracellular iron homeostasis, thus triggering the activity of Fe(2+) prolyl hydroxylase (PHD) enzymes, and leading to HIF1A hydroxylation and subsequent proteasomal degradation. May play a role in neurite development and synaptic connectivity. The protein is V-type proton ATPase catalytic subunit A (ATP6V1A) of Sus scrofa (Pig).